The following is a 262-amino-acid chain: Pyridoxine 5'-phosphate synthase (262 aa).

N6 contacts 3-amino-2-oxopropyl phosphate. Residue 8 to 9 (DH) coordinates 1-deoxy-D-xylulose 5-phosphate. R17 lines the 3-amino-2-oxopropyl phosphate pocket. The active-site Proton acceptor is H43. 1-deoxy-D-xylulose 5-phosphate contacts are provided by R45 and H50. E70 (proton acceptor) is an active-site residue. A 1-deoxy-D-xylulose 5-phosphate-binding site is contributed by T102. The active-site Proton donor is H215. 3-amino-2-oxopropyl phosphate-binding positions include G216 and 237–238 (GH).

Belongs to the PNP synthase family. As to quaternary structure, homooctamer; tetramer of dimers.

The protein localises to the cytoplasm. The enzyme catalyses 3-amino-2-oxopropyl phosphate + 1-deoxy-D-xylulose 5-phosphate = pyridoxine 5'-phosphate + phosphate + 2 H2O + H(+). The protein operates within cofactor biosynthesis; pyridoxine 5'-phosphate biosynthesis; pyridoxine 5'-phosphate from D-erythrose 4-phosphate: step 5/5. In terms of biological role, catalyzes the complicated ring closure reaction between the two acyclic compounds 1-deoxy-D-xylulose-5-phosphate (DXP) and 3-amino-2-oxopropyl phosphate (1-amino-acetone-3-phosphate or AAP) to form pyridoxine 5'-phosphate (PNP) and inorganic phosphate. This is Pyridoxine 5'-phosphate synthase from Helicobacter pylori (strain HPAG1).